The following is a 61-amino-acid chain: Protein YncO (61 aa).

A helical membrane pass occupies residues 18 to 38; sequence HVFLYVFYIFLFLVLFIMTIY.

The protein localises to the cell inner membrane. The protein is Protein YncO of Escherichia coli (strain K12).